The following is a 47-amino-acid chain: Potassium channel toxin alpha-KTx 7.1 (47 aa).

Positions 1-12 (RGSVDYKDDDDK) are cleaved as a signal peptide. 3 disulfide bridges follow: cysteine 16–cysteine 37, cysteine 22–cysteine 42, and cysteine 26–cysteine 44.

It belongs to the short scorpion toxin superfamily. Potassium channel inhibitor family. Alpha-KTx 07 subfamily. Expressed by the venom gland.

It is found in the secreted. In terms of biological role, potent inhibitor of the A-type voltage-gated potassium channels. Most potent inhibitor of Kv1.2/KCNA2 channels. Reversibly block the Shaker B potassium-channels (Kv1.1 sub-family). This Pandinus imperator (Emperor scorpion) protein is Potassium channel toxin alpha-KTx 7.1 (PTX-1).